Reading from the N-terminus, the 153-residue chain is Ribosomal RNA large subunit methyltransferase H (153 aa).

S-adenosyl-L-methionine contacts are provided by residues Ile-75, Gly-103, and Leu-121–Phe-126.

It belongs to the RNA methyltransferase RlmH family. As to quaternary structure, homodimer.

It is found in the cytoplasm. The enzyme catalyses pseudouridine(1915) in 23S rRNA + S-adenosyl-L-methionine = N(3)-methylpseudouridine(1915) in 23S rRNA + S-adenosyl-L-homocysteine + H(+). Specifically methylates the pseudouridine at position 1915 (m3Psi1915) in 23S rRNA. This Helicobacter hepaticus (strain ATCC 51449 / 3B1) protein is Ribosomal RNA large subunit methyltransferase H.